Reading from the N-terminus, the 481-residue chain is Cysteine--tRNA ligase (481 aa).

Position 43 (cysteine 43) interacts with Zn(2+). The short motif at 45–55 is the 'HIGH' region element; sequence ATVQGLPHIGH. Zn(2+) contacts are provided by cysteine 221, histidine 246, and glutamate 250. Positions 277–281 match the 'KMSKS' region motif; sequence KMSKS. An ATP-binding site is contributed by lysine 280.

It belongs to the class-I aminoacyl-tRNA synthetase family. Monomer. Zn(2+) serves as cofactor.

It localises to the cytoplasm. The enzyme catalyses tRNA(Cys) + L-cysteine + ATP = L-cysteinyl-tRNA(Cys) + AMP + diphosphate. The chain is Cysteine--tRNA ligase from Mycobacterium sp. (strain KMS).